Reading from the N-terminus, the 98-residue chain is Elicitin Vex1 (98 aa).

Cystine bridges form between cysteine 3–cysteine 71, cysteine 27–cysteine 56, and cysteine 51–cysteine 95. Residue asparagine 92 is glycosylated (N-linked (GlcNAc...) asparagine).

Belongs to the elicitin family.

The protein localises to the secreted. Induces local and distal defense responses (incompatible hypersensitive reaction) in plants from the solanaceae and cruciferae families. Elicits leaf necrosis and causes the accumulation of pathogenesis-related proteins. Might interact with the lipidic molecules of the plasma membrane. The polypeptide is Elicitin Vex1 (Phytopythium vexans (Damping-off fungus)).